We begin with the raw amino-acid sequence, 251 residues long: Protein FAM216A (251 aa).

The segment covering 1–16 has biased composition (polar residues); sequence MPNQGPVSDWTECSSS. The tract at residues 1 to 49 is disordered; sequence MPNQGPVSDWTECSSSAEPPAVARAEGGGGGSAGHSYYQNSKDRIKDGH.

The protein belongs to the FAM216 family.

This chain is Protein FAM216A (FAM216A), found in Bos taurus (Bovine).